A 435-amino-acid polypeptide reads, in one-letter code: Homogentisate 1,2-dioxygenase (435 aa).

Catalysis depends on His289, which acts as the Proton acceptor. His332 and Glu338 together coordinate Fe cation. 2 residues coordinate homogentisate: Tyr347 and His368. His368 contributes to the Fe cation binding site.

Belongs to the homogentisate dioxygenase family. Hexamer; dimer of trimers. Requires Fe cation as cofactor.

It carries out the reaction homogentisate + O2 = 4-maleylacetoacetate + H(+). Its pathway is amino-acid degradation; L-phenylalanine degradation; acetoacetate and fumarate from L-phenylalanine: step 4/6. In terms of biological role, involved in the catabolism of homogentisate (2,5-dihydroxyphenylacetate or 2,5-OH-PhAc), a central intermediate in the degradation of phenylalanine and tyrosine. Catalyzes the oxidative ring cleavage of the aromatic ring of homogentisate to yield maleylacetoacetate. The sequence is that of Homogentisate 1,2-dioxygenase from Pseudomonas savastanoi pv. phaseolicola (strain 1448A / Race 6) (Pseudomonas syringae pv. phaseolicola (strain 1448A / Race 6)).